The chain runs to 216 residues: FMN-dependent NADH:quinone oxidoreductase 2 (216 aa).

Residues serine 9, 15–17 (SVS), 96–99 (MYNF), and 140–143 (SRGG) contribute to the FMN site.

The protein belongs to the azoreductase type 1 family. In terms of assembly, homodimer. The cofactor is FMN.

The catalysed reaction is 2 a quinone + NADH + H(+) = 2 a 1,4-benzosemiquinone + NAD(+). The enzyme catalyses N,N-dimethyl-1,4-phenylenediamine + anthranilate + 2 NAD(+) = 2-(4-dimethylaminophenyl)diazenylbenzoate + 2 NADH + 2 H(+). Its function is as follows. Quinone reductase that provides resistance to thiol-specific stress caused by electrophilic quinones. Functionally, also exhibits azoreductase activity. Catalyzes the reductive cleavage of the azo bond in aromatic azo compounds to the corresponding amines. In Xanthomonas euvesicatoria pv. vesicatoria (strain 85-10) (Xanthomonas campestris pv. vesicatoria), this protein is FMN-dependent NADH:quinone oxidoreductase 2.